Reading from the N-terminus, the 932-residue chain is Protocadherin gamma-A8 (932 aa).

An N-terminal signal peptide occupies residues 1–29; it reads MAAPQSRPRRGELILLCALLGTLWEIGRG. Cadherin domains lie at 30–133, 134–242, 243–347, 348–452, 453–562, and 570–682; these read QIRY…NPKF, QVED…APVF, PHPI…RPEV, IITS…PPTF, PHAS…APEI, and DGST…KPSV. Topologically, residues 30 to 692 are extracellular; the sequence is QIRYSVPEET…DPNDSSLTLY (663 aa). N-linked (GlcNAc...) asparagine glycosylation is present at Asn-47. Asn-414, Asn-419, and Asn-545 each carry an N-linked (GlcNAc...) asparagine glycan. The N-linked (GlcNAc...) asparagine glycan is linked to Asn-685. A helical membrane pass occupies residues 693 to 713; sequence LVVAVAAISCVFLAFVAVLLG. Residues 714 to 932 lie on the Cytoplasmic side of the membrane; it reads LRLRRWHKSR…KKKSGKKEKK (219 aa). 2 disordered regions span residues 804 to 841 and 902 to 932; these read ADHG…WPNN and ATLT…KEKK. The span at 810 to 841 shows a compositional bias: polar residues; that stretch reads APPNTDWRFSQAQRPGTSGSQNGDDTGTWPNN. Positions 922-932 are enriched in basic residues; that stretch reads NKKKSGKKEKK.

It localises to the cell membrane. In terms of biological role, potential calcium-dependent cell-adhesion protein. May be involved in the establishment and maintenance of specific neuronal connections in the brain. In Homo sapiens (Human), this protein is Protocadherin gamma-A8 (PCDHGA8).